The primary structure comprises 324 residues: uncharacterized protein (324 aa).

8 helical membrane passes run Val-5–Met-24, Phe-39–Leu-61, Phe-68–Ala-90, Trp-95–Val-117, Gln-130–Leu-152, Met-162–Leu-179, Leu-199–Trp-218, and Thr-228–Thr-250.

The protein localises to the cell membrane. This is an uncharacterized protein from Bacillus subtilis (strain 168).